The following is a 101-amino-acid chain: Urease subunit beta (101 aa).

It belongs to the urease beta subunit family. Heterotrimer of UreA (gamma), UreB (beta) and UreC (alpha) subunits. Three heterotrimers associate to form the active enzyme.

Its subcellular location is the cytoplasm. The catalysed reaction is urea + 2 H2O + H(+) = hydrogencarbonate + 2 NH4(+). It functions in the pathway nitrogen metabolism; urea degradation; CO(2) and NH(3) from urea (urease route): step 1/1. This chain is Urease subunit beta, found in Haemophilus influenzae (strain 86-028NP).